The sequence spans 761 residues: Copper-exporting P-type ATPase (761 aa).

At Thr-2 the chain carries N-acetylthreonine. In terms of domain architecture, HMA spans 14 to 78 (QRIQLRISGM…AVRRAGYQAD (65 aa)). Cu(+) contacts are provided by Cys-25 and Cys-28. The next 6 helical transmembrane spans lie at 102–122 (LAIA…FGVV), 129–149 (GWQW…AWPF), 164–184 (METL…YTVF), 199–219 (LLGS…FVLV), 361–381 (VFVP…LIAG), and 387–407 (AVSA…GLAT). The active-site 4-aspartylphosphate intermediate is Asp-443. Transmembrane regions (helical) follow at residues 695 to 714 (MVWA…AGLL) and 718 to 735 (VAGA…SNSL).

The protein belongs to the cation transport ATPase (P-type) (TC 3.A.3) family. Type IB subfamily.

Its subcellular location is the cell membrane. The enzyme catalyses Cu(+)(in) + ATP + H2O = Cu(+)(out) + ADP + phosphate + H(+). Its activity is regulated as follows. ATPase activity is stimulated by Cu(+) ions. Its function is as follows. Involved in copper export. Could be involved in the copper detoxification of mycobacterial cells. The sequence is that of Copper-exporting P-type ATPase (ctpA) from Mycobacterium tuberculosis (strain ATCC 25618 / H37Rv).